Consider the following 232-residue polypeptide: MKNLCIIPARGGSKRIPRKNIIDFLGKPLIAYSIENALNSGIFDEIVLSSDDEEIIEVALKYGAKAPFVRDKNLSDDYASSTAAVQNAIEILQSQNQIYDHVCCLYATAPLLNKNILKQAYEKFIQNQSKFLFAATEFEYPIQRAFYLNENNQVYMFDEKHYKSRSQDLTKAYHDAGAFYFGTSKAWLEEDFIFKPHSSVFVLPRNLVCDIDTMQDLEFAKILYKVNHESAF.

This sequence belongs to the CMP-NeuNAc synthase family. Mg(2+) is required as a cofactor.

It carries out the reaction pseudaminate + CTP = CMP-pseudaminate + diphosphate. Its function is as follows. Catalyzes the final step in the biosynthesis of pseudaminic acid, a sialic-acid-like sugar that is used to modify flagellin. Mediates the activation of pseudaminic acid with CMP by forming CMP-pseudaminic acid. In Campylobacter jejuni subsp. jejuni serotype O:23/36 (strain 81-176), this protein is Pseudaminic acid cytidylyltransferase (pseF).